The primary structure comprises 313 residues: Probable RuBisCO transcriptional regulator (313 aa).

The 58-residue stretch at 6–63 (FTLDQLLILKAIAAQGSFKKAADSLYISQPAVSMQVQNIEKQLNVQLLDRGGRRANLT) folds into the HTH lysR-type domain. The H-T-H motif DNA-binding region spans 23-42 (FKKAADSLYISQPAVSMQVQ).

The protein belongs to the LysR transcriptional regulatory family.

It is found in the plastid. The protein resides in the chloroplast. In terms of biological role, trans-acting transcriptional regulator of RuBisCO genes (rbcL and rbcS) expression. The chain is Probable RuBisCO transcriptional regulator (rbcR) from Chlorokybus atmophyticus (Soil alga).